The sequence spans 439 residues: Deacetylvindoline O-acetyltransferase (439 aa).

His158 acts as the Proton acceptor in catalysis. The stretch at 317–344 (TKLVINELRKEKQKIKNLSREKLTYVAQ) forms a coiled coil. The active-site Proton acceptor is the Asp380.

This sequence belongs to the plant acyltransferase family. Monomer. In terms of tissue distribution, predominantly expressed in young leaves of mature plants. Low expression in stems and flowers and not detected in roots. Confined to the laticifer and idioblast cells of leaves, stems, and flower buds.

It is found in the cytoplasm. The protein localises to the nucleus. The enzyme catalyses 4-O-deacetylvindoline + acetyl-CoA = vindoline + CoA. It functions in the pathway alkaloid biosynthesis; vindoline biosynthesis. In terms of biological role, involved in the biosynthesis of vindoline, a precursor of vinblastine and vincristine. This is Deacetylvindoline O-acetyltransferase from Catharanthus roseus (Madagascar periwinkle).